The chain runs to 111 residues: MVNVPKTRRTFCKKCGKHQPHKVTQYKKGKDSLYAQGKRRYDRKQSGYGGQTKPIFRKKAKTTKKIVLRLECVEPNCRSKRMLAIKRCKHFELGGDKKRKVCYAWKVQPCL.

Residues Cys-12, Cys-15, Cys-72, and Cys-77 each contribute to the Zn(2+) site.

Belongs to the eukaryotic ribosomal protein eL42 family. In terms of assembly, component of the large ribosomal subunit.

It is found in the cytoplasm. In terms of biological role, component of the large ribosomal subunit. The ribosome is a large ribonucleoprotein complex responsible for the synthesis of proteins in the cell. This Oryctolagus cuniculus (Rabbit) protein is Large ribosomal subunit protein eL42 (RPL36A).